Here is a 929-residue protein sequence, read N- to C-terminus: Band 3 anion transport protein (929 aa).

Residue Met-1 is modified to N-acetylmethionine. Residues 1–422 lie on the Cytoplasmic side of the membrane; that stretch reads MGDMRDHEEV…LSDITDALSP (422 aa). The residue at position 18 (Ser-18) is a Phosphoserine. Tyr-31 and Tyr-56 each carry phosphotyrosine. The interval 46-67 is disordered; it reads ALPTEQTATDYVPSSTSTPHPS. Over residues 58 to 67 the composition is skewed to low complexity; that stretch reads PSSTSTPHPS. A globular region spans residues 69-303; the sequence is GQVYVELQEL…LGRAAATLMT (235 aa). The interval 190–199 is interaction with ANK1; sequence AVLTRSGGAS. 3 positions are modified to phosphoserine: Ser-199, Ser-222, and Ser-363. The interval 317–370 is dimerization arm; the sequence is REELLRSLESFLDCSLVLPPTDAPSEKALLNLVPVQKELLRRRYLPSPAKPDPN. Positions 366–389 are disordered; it reads KPDPNLYNTLDLNGGKGGPGDEDD. Phosphotyrosine is present on Tyr-372. A Phosphothreonine modification is found at Thr-374. The chain crosses the membrane as a helical span at residues 423-446; sequence QVLAAVIFIYFAALSPAVTFGGLL. The Extracellular segment spans residues 447 to 454; sequence GEKTRNLM. A helical transmembrane segment spans residues 455–475; that stretch reads GVSELLISTAVQGILFALLGA. Residues 476-478 lie on the Cytoplasmic side of the membrane; that stretch reads QPL. Residues 479-495 form a discontinuously helical membrane-spanning segment; that stretch reads LVLGFSGPLLVFEEAFF. Topologically, residues 496–504 are extracellular; the sequence is SFCESNNLE. The chain crosses the membrane as a helical span at residues 505-525; the sequence is YIVGRAWIGFWLILLVMLVVA. Residues 526–537 are Cytoplasmic-facing; sequence FEGSFLVQYISR. The chain crosses the membrane as a helical span at residues 538–560; it reads YTQEIFSFLISLIFIYETFSKLI. Residues 561–588 lie on the Extracellular side of the membrane; that stretch reads KIFQDYPLQQTYAPVVMKPKPQGPVPNT. The helical transmembrane segment at 589–609 threads the bilayer; the sequence is ALFSLVLMAGTFLLAMTLRKF. The Cytoplasmic segment spans residues 610 to 620; sequence KNSTYFPGKLR. Residues 621–641 form a helical membrane-spanning segment; sequence RVIGDFGVPISILIMVLVDSF. The Extracellular portion of the chain corresponds to 642–681; the sequence is IKGTYTQKLSVPDGLKVSNSSARGWVIHPLGLYRLFPTWM. Asn-660 carries an N-linked (GlcNAc...) asparagine glycan. A helical membrane pass occupies residues 682–702; it reads MFASVLPALLVFILIFLESQI. Over 703–718 the chain is Cytoplasmic; that stretch reads TTLIVSKPERKMIKGS. A helical membrane pass occupies residues 719–737; it reads GFHLDLLLVVGMGGVAALF. A discontinuously helical membrane pass occupies residues 738 to 755; it reads GMPWLSATTVRSVTHANA. The Cytoplasmic segment spans residues 756-778; it reads LTVMGKASGPGAAAQIQEVKEQR. The next 2 helical transmembrane spans lie at 779-799 and 800-818; these read ISGLLVSVLVGLSILMEPILS and RIPLAVLFGIFLYMGVTSL. Residues 819–856 are Cytoplasmic-facing; it reads SGIQLFDRILLLFKPPKYHPDVPFVKRVKTWRMHLFTG. Residues 857–887 constitute an intramembrane region (discontinuously helical); that stretch reads IQIICLAVLWVVKSTPASLALPFVLILTVPL. A lipid anchor (S-palmitoyl cysteine) is attached at Cys-861. The Cytoplasmic portion of the chain corresponds to 888–929; sequence RRLILPLIFRELELQCLDGDDAKVTFDEENGLDEYDEVPMPV. Tyr-922 is modified (phosphotyrosine).

It belongs to the anion exchanger (TC 2.A.31) family. A dimer in solution, but in its membrane environment, it exists primarily as a mixture of dimers and tetramers and spans the membrane asymmetrically. Component of the ankyrin-1 complex in the erythrocyte, composed of ANK1, RHCE, RHAG, SLC4A1, EPB42, GYPA, GYPB and AQP1. Interacts with STOM; this interaction positively regulates SLC4A1 activity. Interacts with GYPA; a GYPA monomer is bound at each end of the SLC4A1 dimer forming a heterotetramer. Three SLC4A1 dimers (Band 3-I, Band 3-II and Band 3-III) participates in the ankyrin-1 complex. Interacts (via the cytoplasmic domain) with EPB42; this interaction is mediated by the SLC4A1 Band 3-I dimer. Interacts (via the cytoplasmic domain) directly with ANK1; this interaction is mediated by the SLC4A1 Band 3-II and Band 3-III dimers. As to quaternary structure, interacts with TMEM139. Detected in erythrocytes (at protein level).

It is found in the cell membrane. The protein localises to the basolateral cell membrane. The enzyme catalyses hydrogencarbonate(in) + chloride(out) = hydrogencarbonate(out) + chloride(in). Functions both as a transporter that mediates electroneutral anion exchange across the cell membrane and as a structural protein. Component of the ankyrin-1 complex of the erythrocyte membrane; required for normal flexibility and stability of the erythrocyte membrane and for normal erythrocyte shape via the interactions of its cytoplasmic domain with cytoskeletal proteins, glycolytic enzymes, and hemoglobin. Functions as a transporter that mediates the 1:1 exchange of inorganic anions across the erythrocyte membrane. Mediates chloride-bicarbonate exchange in the kidney, and is required for normal acidification of the urine. This is Band 3 anion transport protein from Mus musculus (Mouse).